Reading from the N-terminus, the 149-residue chain is Hydrogenase expression/formation protein HupT (149 aa).

This sequence belongs to the HupJ family.

This is Hydrogenase expression/formation protein HupT (hupT) from Azotobacter chroococcum mcd 1.